A 117-amino-acid chain; its full sequence is Ig heavy chain V region 5-84 (117 aa).

Residues 1 to 19 form the signal peptide; the sequence is MNFGLSLIFLVLVLKGVLC. Residues 20–49 are framework-1; the sequence is EVKLVESGGGLVQPGGSLKLSCAASGFTFS. An intrachain disulfide couples cysteine 41 to cysteine 115. Positions 50–54 are complementarity-determining-1; it reads SYTMS. The interval 55 to 68 is framework-2; that stretch reads WVRQTPEKRLEWVA. The complementarity-determining-2 stretch occupies residues 69 to 85; sequence YISNGGGSTYYPDTVKG. The framework-3 stretch occupies residues 86 to 117; the sequence is RFTISRDNAKNNLYLQMSSLKSEDTAMYYCAR.

This Mus musculus (Mouse) protein is Ig heavy chain V region 5-84.